The sequence spans 335 residues: Holliday junction branch migration complex subunit RuvB (335 aa).

A large ATPase domain (RuvB-L) region spans residues 4-184 (ADRIISGQAK…FGIVQRLEFY (181 aa)). Residues isoleucine 23, arginine 24, glycine 65, lysine 68, threonine 69, threonine 70, 131-133 (EDY), arginine 174, tyrosine 184, and arginine 221 contribute to the ATP site. Threonine 69 contacts Mg(2+). The tract at residues 185 to 255 (SVEDLTSIVA…VAKQALSMLD (71 aa)) is small ATPAse domain (RuvB-S). Positions 258–335 (DAGFDYLDRK…RHFGLQKLSD (78 aa)) are head domain (RuvB-H). The DNA site is built by arginine 294, arginine 313, and arginine 318.

The protein belongs to the RuvB family. In terms of assembly, homohexamer. Forms an RuvA(8)-RuvB(12)-Holliday junction (HJ) complex. HJ DNA is sandwiched between 2 RuvA tetramers; dsDNA enters through RuvA and exits via RuvB. An RuvB hexamer assembles on each DNA strand where it exits the tetramer. Each RuvB hexamer is contacted by two RuvA subunits (via domain III) on 2 adjacent RuvB subunits; this complex drives branch migration. In the full resolvosome a probable DNA-RuvA(4)-RuvB(12)-RuvC(2) complex forms which resolves the HJ.

It localises to the cytoplasm. The catalysed reaction is ATP + H2O = ADP + phosphate + H(+). In terms of biological role, the RuvA-RuvB-RuvC complex processes Holliday junction (HJ) DNA during genetic recombination and DNA repair, while the RuvA-RuvB complex plays an important role in the rescue of blocked DNA replication forks via replication fork reversal (RFR). RuvA specifically binds to HJ cruciform DNA, conferring on it an open structure. The RuvB hexamer acts as an ATP-dependent pump, pulling dsDNA into and through the RuvAB complex. RuvB forms 2 homohexamers on either side of HJ DNA bound by 1 or 2 RuvA tetramers; 4 subunits per hexamer contact DNA at a time. Coordinated motions by a converter formed by DNA-disengaged RuvB subunits stimulates ATP hydrolysis and nucleotide exchange. Immobilization of the converter enables RuvB to convert the ATP-contained energy into a lever motion, pulling 2 nucleotides of DNA out of the RuvA tetramer per ATP hydrolyzed, thus driving DNA branch migration. The RuvB motors rotate together with the DNA substrate, which together with the progressing nucleotide cycle form the mechanistic basis for DNA recombination by continuous HJ branch migration. Branch migration allows RuvC to scan DNA until it finds its consensus sequence, where it cleaves and resolves cruciform DNA. The sequence is that of Holliday junction branch migration complex subunit RuvB from Haemophilus influenzae (strain 86-028NP).